Here is a 903-residue protein sequence, read N- to C-terminus: MTHSAPSNPTQLPSDKFLRTADVRKAFIDFFVSKQHTHVPSSSLVPYNDPTLLFTNAGMNQFKDCFLGIDKRDYTRAVTSQKCVRAGGKHNDLDNVGYTARHHTFFEMLGNFSFGDYFKKSAIAYAWEFLTSKQWLGLDADKLYVTIYESDDEAFDIWHQDIGLAAERIIRIGDNKGAPYASDNFWAMGDTGPCGPCSEVFYDHGEHVEGGLPGTPEEDGDRYIEVWNCVFMQFNRQPDGTMEPLPAPSVDTGMGLERISAILQGVHSNYEIDLFVNLINSAADIIGIKNDNQASLKVVADHIRAVSFLIADGVLPSNEGRGYVLRRIIRRAVRHGNKLGAEDSFFYKMVAPLVKEMGDAYPQLVEKQAFIEKAIEKEEVQFAKTLAQGLRLLDSELESLKSGDVLSGEAAFKLYDTYGFPVDLTADITRERGIGIDEAGFDEQMNIQRQRARDAGKFDVDYSAAIKVETPTEFVGYEQLDEKEVNIIGLYQDGKEVEVLNEGDEGVIVLDRTPFYAEGGGQVGEMGEIRTSSGVFNVEDTKKSGQAFIHHGVVNMGSLQKSQTADAQVVSAIRSASARNHSATHLLHAALRKVLGDSVSQKGSLVSSEMLRFDFSYDNAVSQKDLATIERLVNEQIQANVETHIELMNIDDAMAKGAAALFGEKYGETVRVLTMGTTEIEDGIQKPFSIELCGGLHVKRTGDIGLFKITSESGIAAGIRRIEALTGMGALRYIQQADSQLTALANQLKAKRPEVADRVQTMADKQRELEKQIERLNQKIASAQAATLVDNVQTIADKKVLIAQVAGIDGKAMRGLIDDIKSKLQDTIIILVGEKDGQLALAASVSKSLTGDIKAGDIIRHLADELEGKGGGKPDYAQGGAPSSDKLTGVMQALPNWVASQLS.

Zn(2+) contacts are provided by histidine 581, histidine 585, cysteine 693, and histidine 697.

The protein belongs to the class-II aminoacyl-tRNA synthetase family. The cofactor is Zn(2+).

It is found in the cytoplasm. It carries out the reaction tRNA(Ala) + L-alanine + ATP = L-alanyl-tRNA(Ala) + AMP + diphosphate. Functionally, catalyzes the attachment of alanine to tRNA(Ala) in a two-step reaction: alanine is first activated by ATP to form Ala-AMP and then transferred to the acceptor end of tRNA(Ala). Also edits incorrectly charged Ser-tRNA(Ala) and Gly-tRNA(Ala) via its editing domain. The polypeptide is Alanine--tRNA ligase (Psychrobacter sp. (strain PRwf-1)).